We begin with the raw amino-acid sequence, 254 residues long: Triosephosphate isomerase (254 aa).

Position 9-11 (9-11 (NWK)) interacts with substrate. Catalysis depends on His-95, which acts as the Electrophile. Glu-167 serves as the catalytic Proton acceptor. Substrate contacts are provided by residues Gly-173, Ser-213, and 234 to 235 (GG).

This sequence belongs to the triosephosphate isomerase family. In terms of assembly, homodimer.

Its subcellular location is the cytoplasm. It carries out the reaction D-glyceraldehyde 3-phosphate = dihydroxyacetone phosphate. It functions in the pathway carbohydrate biosynthesis; gluconeogenesis. It participates in carbohydrate degradation; glycolysis; D-glyceraldehyde 3-phosphate from glycerone phosphate: step 1/1. Involved in the gluconeogenesis. Catalyzes stereospecifically the conversion of dihydroxyacetone phosphate (DHAP) to D-glyceraldehyde-3-phosphate (G3P). The sequence is that of Triosephosphate isomerase from Roseiflexus castenholzii (strain DSM 13941 / HLO8).